The sequence spans 419 residues: MKRLLVLSVLLAAVFGNENFVGHQVLRISATDEAQVQKVRELEELEHLKLDFWRDPARAGLPIDVRVPFPTIQSVKAFLEYHDISYEIMIEDVQSLLDEEKQQMSAFQARALSTDAFNYATYHTLDEIYEFMDLLVTEHPQLVSKIQIGSTFEGRPINVLKFSTGGTNRPAIWIDTGIHSREWVTQASGVWFAKKITKDYGQEPTLTAILDNMDIFLEIVTNPDGFVYTHKTNRMWRKTRSHTEGSLCVGVDPNRNWDAAFGMPGASSNPCSETYRGKFPNSEVEVKSIVDFVTSHGNIKAFISIHSYSQLLLYPYGYTSEPAPDKEELDQLAKSAVTALTSLHGTKFKYGSIIDTIYQASGSTIDWTYSQGIKYSFTFELRDTGLRGFLLPASQIIPTAEETWLALLTIMDHTVKHPY.

A signal peptide spans 1–16; the sequence is MKRLLVLSVLLAAVFG. Positions 17–110 are cleaved as a propeptide — activation peptide; that stretch reads NENFVGHQVL…KQQMSAFQAR (94 aa). The 294-residue stretch at 121–414 folds into the Peptidase M14 domain; it reads TYHTLDEIYE…LALLTIMDHT (294 aa). The Zn(2+) site is built by His-179 and Glu-182. Substrate is bound by residues 179 to 182, Arg-237, and 254 to 255; these read HSRE and NR. Cys-248 and Cys-271 form a disulfide bridge. His-306 is a Zn(2+) binding site. Residues 307–308 and Tyr-358 each bind substrate; that span reads SY. Residue Glu-380 is the Proton donor/acceptor of the active site.

The protein belongs to the peptidase M14 family. Monomer. Zn(2+) serves as cofactor.

It is found in the secreted. The enzyme catalyses Release of a C-terminal amino acid, but little or no action with -Asp, -Glu, -Arg, -Lys or -Pro.. Functionally, carboxypeptidase that catalyzes the release of a C-terminal amino acid, but has little or no action with -Asp, -Glu, -Arg, -Lys or -Pro. In Mus musculus (Mouse), this protein is Carboxypeptidase A1 (Cpa1).